Here is a 707-residue protein sequence, read N- to C-terminus: Complement C1r-A subcomponent (707 aa).

The first 16 residues, 1 to 16 (MWLFALLVTLFYGVEG), serve as a signal peptide directing secretion. In terms of domain architecture, CUB 1 spans 17–140 (SIYLPQKLYG…KGFLAYYQAV (124 aa)). Ca(2+) contacts are provided by glutamate 65, aspartate 73, and aspartate 118. Cysteine 70 and cysteine 88 form a disulfide bridge. The N-linked (GlcNAc...) asparagine glycan is linked to asparagine 124. 3 residues coordinate Ca(2+): aspartate 141, leucine 142, and glutamate 144. An EGF-like; calcium-binding domain is found at 141-189 (DLDECASQPNSVEEGLQPRCQHLCHNYVGGYFCSCHPGYELQKDGQSCQ). Disulfide bonds link cysteine 145-cysteine 164, cysteine 160-cysteine 173, cysteine 175-cysteine 188, and cysteine 192-cysteine 219. Residues asparagine 166, tyrosine 167, and glycine 170 each contribute to the Ca(2+) site. Position 166 is a (3R)-3-hydroxyasparagine (asparagine 166). The 113-residue stretch at 192 to 304 (CSSELYTEPS…RGWKLHYTTE (113 aa)) folds into the CUB 2 domain. Serine 205 carries the phosphoserine; by CK2 modification. N-linked (GlcNAc...) asparagine glycosylation is present at asparagine 220. Residues aspartate 242, aspartate 252, aspartate 289, and aspartate 293 each contribute to the Ca(2+) site. Cysteine 249 and cysteine 267 are joined by a disulfide. 2 Sushi domains span residues 306–372 (IKCP…RCKI) and 373–448 (KNCG…RCLP). 5 cysteine pairs are disulfide-bonded: cysteine 308–cysteine 357, cysteine 337–cysteine 370, cysteine 375–cysteine 428, cysteine 405–cysteine 446, and cysteine 450–cysteine 579. Positions 463 to 704 (IIRGQPARPG…YVDWIKKEMG (242 aa)) constitute a Peptidase S1 domain. Active-site charge relay system residues include histidine 501 and aspartate 559. A glycan (N-linked (GlcNAc...) asparagine) is linked at asparagine 583. Cystine bridges form between cysteine 622–cysteine 641 and cysteine 652–cysteine 682. Serine 656 serves as the catalytic Charge relay system.

Belongs to the peptidase S1 family. In terms of assembly, core component of the complement C1 complex, a calcium-dependent complex composed of 1 molecule of the C1Q subcomplex, 2 molecules of C1R and 2 molecules of C1S. The C1Q subcomplex is composed 18 subunits: 3 chains of C1QA, C1QB, and C1QC trimerize to form 6 collagen-like triple helices connected to six globular ligand-recognition modules. Within the C1 complex, C1R is a dimer of identical chains, each of which is activated by cleavage into two chains, heavy and light, connected by disulfide bonds. Cleaved and activated by autocatalytic processing to generate Complement C1r subcomponent heavy and light chains that are connected by disulfide bonds. In terms of processing, the iron and 2-oxoglutarate dependent 3-hydroxylation of aspartate and asparagine is (R) stereospecific within EGF domains.

It is found in the secreted. Its subcellular location is the cell surface. It catalyses the reaction Selective cleavage of Lys(or Arg)-|-Ile bond in complement subcomponent C1s to form the active form of C1s (EC 3.4.21.42).. With respect to regulation, activated by the C1Q subcomplex of the C1 complex following C1Q binding to immunoglobulins (IgG or IgM) complexed with antigens to form antigen-antibody complexes on the surface of pathogens. Immunoglobulin-binding promotes autoactivation of C1R, which results in the cleavage of the Arg-Ile bond in the catalytic domain. Serine protease component of the complement C1 complex, a multiprotein complex that initiates the classical pathway of the complement system, a cascade of proteins that leads to phagocytosis and breakdown of pathogens and signaling that strengthens the adaptive immune system. C1R catalyzes the first enzymatic step in the classical complement pathway: it is activated by the C1Q subcomplex of the C1 complex, which associates with IgG or IgM immunoglobulins complexed with antigens to form antigen-antibody complexes on the surface of pathogens. Immunoglobulin-binding promotes the autocatalytic cleavage and activation of C1R. Activated C1R then cleaves and activates C1S, the second protease of the classical complement pathway. It is unclear if C1R activates C1S within single, strained C1 complexes or between neighboring C1 complexes on surfaces. This Mus musculus (Mouse) protein is Complement C1r-A subcomponent (C1ra).